A 387-amino-acid polypeptide reads, in one-letter code: Putative F-box protein At1g47800 (387 aa).

The 47-residue stretch at L8–F54 folds into the F-box domain.

This is Putative F-box protein At1g47800 from Arabidopsis thaliana (Mouse-ear cress).